The primary structure comprises 146 residues: Transcriptional regulator MraZ (146 aa).

SpoVT-AbrB domains lie at 5–48 (TSYH…TLEE) and 77–120 (ASEC…SRAK).

This sequence belongs to the MraZ family. In terms of assembly, forms oligomers.

It localises to the cytoplasm. It is found in the nucleoid. In Desulfosudis oleivorans (strain DSM 6200 / JCM 39069 / Hxd3) (Desulfococcus oleovorans), this protein is Transcriptional regulator MraZ.